We begin with the raw amino-acid sequence, 315 residues long: Taste receptor type 2 member 3 (315 aa).

Over 1–5 (MGLTE) the chain is Extracellular. A helical transmembrane segment spans residues 6–26 (GLFLILSGTQFALGILVNCFI). The Cytoplasmic segment spans residues 27-41 (GLVNGSSWFKTKRMS). A helical transmembrane segment spans residues 42–62 (LSDFIITTLAFLRIILLCIIL). The Extracellular portion of the chain corresponds to 63–93 (TDSFLIEFSPNAHDSGVIMQIIDVSWTFTNH). Residues 94-114 (LSIWLATCLGVLYCLKIASFS) traverse the membrane as a helical segment. Residues 115-127 (HPTFLWLKWRVSR) lie on the Cytoplasmic side of the membrane. The helical transmembrane segment at 128 to 148 (VMVWMLLGVLLLSCGSTASLI) threads the bilayer. At 149-185 (NEFKLYSVFRGIEATXNVTEHFRKKRSEYYLIHVLGT) the chain is on the extracellular side. Asparagine 165 carries N-linked (GlcNAc...) asparagine glycosylation. Residues 186–206 (LWYLPPLIVSLAAYFLLIFSL) traverse the membrane as a helical segment. At 207–233 (GRHTRQMLQNGTSSRDPSTEAHKRAIR) the chain is on the cytoplasmic side. A helical membrane pass occupies residues 234 to 254 (IILSSFFLFLLYFLAFLIASF). Residues 255–265 (GNFLPKTKMAK) are Extracellular-facing. Residues 266-286 (MIGEVMTMFYPAGHSFILILG) traverse the membrane as a helical segment. At 287-315 (NSKLKQTFVEMLRCESGHLKPGSKGPIFS) the chain is on the cytoplasmic side.

The protein belongs to the G-protein coupled receptor T2R family.

It localises to the membrane. Its function is as follows. Gustducin-coupled receptor implicated in the perception of bitter compounds in the oral cavity and the gastrointestinal tract. Signals through PLCB2 and the calcium-regulated cation channel TRPM5. In Pongo pygmaeus (Bornean orangutan), this protein is Taste receptor type 2 member 3 (TAS2R3).